We begin with the raw amino-acid sequence, 587 residues long: Arginine--tRNA ligase (587 aa).

The short motif at alanine 127–histidine 137 is the 'HIGH' region element.

Belongs to the class-I aminoacyl-tRNA synthetase family. Monomer.

It is found in the cytoplasm. It carries out the reaction tRNA(Arg) + L-arginine + ATP = L-arginyl-tRNA(Arg) + AMP + diphosphate. In Dechloromonas aromatica (strain RCB), this protein is Arginine--tRNA ligase.